A 127-amino-acid polypeptide reads, in one-letter code: Histidine-containing phosphotransfer protein 4 (127 aa).

In terms of domain architecture, HPt spans 27-122; the sequence is NPNFVEEVSA…STLRKKLEHY (96 aa). The residue at position 68 (H68) is a Phosphohistidine.

As to quaternary structure, interacts with the B-type response regulators ARR1 and ARR2. Post-translationally, two-component system major event consists of a His-to-Asp phosphorelay between a sensor histidine kinase (HK) and a response regulator (RR). In plants, the His-to-Asp phosphorelay involves an additional intermediate named Histidine-containing phosphotransfer protein (HPt). This multistep phosphorelay consists of a His-Asp-His-Asp sequential transfer of a phosphate group between first a His and an Asp of the HK protein, followed by the transfer to a conserved His of the HPt protein and finally the transfer to an Asp in the receiver domain of the RR protein. In terms of tissue distribution, predominantly expressed in aerial parts of the plant.

It localises to the cytoplasm. It is found in the cytosol. The protein resides in the nucleus. Its function is as follows. Functions as a two-component phosphorelay mediator between cytokinin sensor histidine kinases and response regulators (B-type ARRs). Plays an important role in propagating cytokinin signal transduction through the multistep His-to-Asp phosphorelay. This Arabidopsis thaliana (Mouse-ear cress) protein is Histidine-containing phosphotransfer protein 4 (AHP4).